A 104-amino-acid polypeptide reads, in one-letter code: Type VII secretion system extracellular protein B (104 aa).

The protein belongs to the WXG100 family. As to quaternary structure, homodimer. When mixed with EsxA does not form heterodimers.

It localises to the secreted. Its function is as follows. Virulence factor that is important for the establishment of infection in the host. EsxB is required for EsxA synthesis as well as secretion. Mediates together with EsxA the release of S.aureus from the host cell. Also inhibits host cytokine production and thus modulates dendritic cell-mediated immunity. The protein is Type VII secretion system extracellular protein B of Staphylococcus aureus (strain Mu50 / ATCC 700699).